The chain runs to 410 residues: Putative formamidase C869.04 (410 aa).

It belongs to the acetamidase/formamidase family. As to quaternary structure, homotrimer.

It localises to the cytoplasm. It is found in the nucleus. It catalyses the reaction formamide + H2O = formate + NH4(+). Its function is as follows. Hydrolyzes formamide with the production of ammonia which can be used as a source of nitrogen for growth. May also act on acetamide, propanamide and butanamide. The polypeptide is Putative formamidase C869.04 (Schizosaccharomyces pombe (strain 972 / ATCC 24843) (Fission yeast)).